The following is a 295-amino-acid chain: Phosphatidylglycerol--prolipoprotein diacylglyceryl transferase (295 aa).

A run of 4 helical transmembrane segments spans residues 28-48 (WYAL…VLAT), 69-89 (LLTW…VLFY), 101-121 (ILMV…VVIA), and 131-151 (IPKL…LLLG). R152 provides a ligand contact to a 1,2-diacyl-sn-glycero-3-phospho-(1'-sn-glycerol). The next 3 helical transmembrane spans lie at 195–215 (QLYE…WLVW), 224–244 (GLIT…VEFF), and 268–288 (GLTM…WFVL).

This sequence belongs to the Lgt family.

It is found in the cell inner membrane. It catalyses the reaction L-cysteinyl-[prolipoprotein] + a 1,2-diacyl-sn-glycero-3-phospho-(1'-sn-glycerol) = an S-1,2-diacyl-sn-glyceryl-L-cysteinyl-[prolipoprotein] + sn-glycerol 1-phosphate + H(+). It participates in protein modification; lipoprotein biosynthesis (diacylglyceryl transfer). Its function is as follows. Catalyzes the transfer of the diacylglyceryl group from phosphatidylglycerol to the sulfhydryl group of the N-terminal cysteine of a prolipoprotein, the first step in the formation of mature lipoproteins. The sequence is that of Phosphatidylglycerol--prolipoprotein diacylglyceryl transferase from Ruegeria pomeroyi (strain ATCC 700808 / DSM 15171 / DSS-3) (Silicibacter pomeroyi).